The primary structure comprises 540 residues: MNREMTSSFLLLTFAICKLIIAVGLNVGPSELLRIGAIDVDGHFTVHPSDLASVSSDFGMLKSPEEPLAVLHPSSAEDVARLVRTAYGSATAFPVSARGHGHSINGQAAAGRNGVVVEMNHGVTGTPKPLVRPDEMYVDVWGGELWVDVLKKTLEHGLAPKSWTDYLYLTVGGTLSNAGISGQAFHHGPQISNVLELDVVTGKGEVMRCSEEENTRLFHGVLGGLGQFGIITRARISLEPAPQRVRWIRVLYSSFKVFTEDQEYLISMHGQLKFDYVEGFVIVDEGLVNNWRSSFFSPRNPVKISSVSSNGSVLYCLEITKNYHDSDSEIVDQEVEILMKKLNFIPTSVFTTDLQYVDFLDRVHKAELKLRSKNLWEVPHPWLNLFVPKSRISDFDKGVFKGILGNKTSGPILIYPMNKDKWDERSSAVTPDEEVFYLVALLRSALTDGEETQKLEYLKDQNRRILEFCEQAKINVKQYLPHHATQEEWVAHFGDKWDRFRSLKAEFDPRHILATGQRIFQNPSLSLFPPSSSSSSAASW.

The first 22 residues, 1-22 (MNREMTSSFLLLTFAICKLIIA), serve as a signal peptide directing secretion. Residues 63–241 (SPEEPLAVLH…TRARISLEPA (179 aa)) form the FAD-binding PCMH-type domain. Ala97, Gly99, and Gly101 together coordinate FAD. His102 is modified (pros-8alpha-FAD histidine). Residues Ser103, Gln107, Asp165, Thr170, Ser176, Ile180, and Ile231 each contribute to the FAD site. 2 N-linked (GlcNAc...) asparagine glycosylation sites follow: Asn310 and Asn406. FAD-binding residues include Tyr479 and Gln517.

The protein belongs to the oxygen-dependent FAD-linked oxidoreductase family. The cofactor is FAD. Expressed in the developing leaf petioles and in the rib zone of the axillary shoot meristems. In roots, expressed in the vascular cylinder within the root apical meristem and only faintly detectable in the differentiated root.

Its subcellular location is the secreted. The protein localises to the extracellular space. It carries out the reaction N(6)-dimethylallyladenine + A + H2O = 3-methyl-2-butenal + adenine + AH2. Functionally, catalyzes the oxidation of cytokinins, a family of N(6)-substituted adenine derivatives that are plant hormones, where the substituent is an isopentenyl group. In association with CKX3 regulates the activity of the reproductive meristems, flower organ size and ovule formation. The polypeptide is Cytokinin dehydrogenase 5 (CKX5) (Arabidopsis thaliana (Mouse-ear cress)).